We begin with the raw amino-acid sequence, 425 residues long: UPF0229 protein YE2273 (425 aa).

Residues 84-110 (TNDRIERPQGGGGGSGSGQGNAGQDGE) are disordered. Over residues 92–108 (QGGGGGSGSGQGNAGQD) the composition is skewed to gly residues.

This sequence belongs to the UPF0229 family.

In Yersinia enterocolitica serotype O:8 / biotype 1B (strain NCTC 13174 / 8081), this protein is UPF0229 protein YE2273.